The chain runs to 1209 residues: Protein FAM83H (1209 aa).

Positions 1–286 (MARRSQSSSQ…LFAQSEPLVP (286 aa)) are DUF1669. The tract at residues 1-286 (MARRSQSSSQ…LFAQSEPLVP (286 aa)) is mediates interaction with CSNK1A1 and is required for FAM83H activity in keratin cytoskeleton organization. Phosphoserine occurs at positions 512, 513, 515, 522, 639, and 660. Disordered stretches follow at residues 512–545 (SSASREVRHGSDPAFGPSPRGLEPSGASRPNLGQ), 615–664 (RDLL…FRSR), and 735–760 (KGPARDPGGAGGAVTSSSHSKAVVSQ). Thr749 is subject to Phosphothreonine. 4 positions are modified to phosphoserine: Ser752, Ser778, Ser806, and Ser871. A disordered region spans residues 829–1056 (AQGRSLSPQG…EERGSRVRLA (228 aa)). Position 873 is a phosphothreonine (Thr873). Phosphoserine occurs at positions 882, 893, 904, and 915. The span at 915–942 (SPTSGFPNRRGSPTTGLMEQKGSPTSTY) shows a compositional bias: polar residues. Thr917 is modified (phosphothreonine). A Phosphoserine modification is found at Ser926. Thr928 carries the post-translational modification Phosphothreonine. Phosphoserine occurs at positions 937, 948, 959, 970, 977, 1035, 1041, and 1057. A Phosphothreonine modification is found at Thr1072. 2 disordered regions span residues 1076–1147 (LEQI…EERD) and 1174–1193 (EAGSSGAGDNLADEDTRDSK). Phosphoserine is present on residues Ser1080, Ser1098, and Ser1177.

This sequence belongs to the FAM83 family. As to quaternary structure, directly interacts (via DUF1669) with casein kinase isoforms CSNK1A1, CSNK1A1L, CSNK1D and CSNK1E. Interaction with CSNK1A1 recruits CSNK1A1 to keratin filaments. Interacts with KRT18 and probably other keratins. In terms of tissue distribution, expressed in tooth follicle, eye, liver and kidney.

The protein localises to the cytoplasm. It is found in the cytoskeleton. May play a major role in the structural organization and calcification of developing enamel. May play a role in keratin cytoskeleton disassembly by recruiting CSNK1A1 to keratin filaments. Thereby, it may regulate epithelial cell migration. The chain is Protein FAM83H from Mus musculus (Mouse).